The primary structure comprises 416 residues: UDP-N-acetylglucosamine 1-carboxyvinyltransferase (416 aa).

Residue 22 to 23 (KN) participates in phosphoenolpyruvate binding. R92 is a UDP-N-acetyl-alpha-D-glucosamine binding site. The active-site Proton donor is the C116. The residue at position 116 (C116) is a 2-(S-cysteinyl)pyruvic acid O-phosphothioketal. UDP-N-acetyl-alpha-D-glucosamine contacts are provided by residues 121-125 (RPVDQ), D304, and I326.

This sequence belongs to the EPSP synthase family. MurA subfamily.

It localises to the cytoplasm. It catalyses the reaction phosphoenolpyruvate + UDP-N-acetyl-alpha-D-glucosamine = UDP-N-acetyl-3-O-(1-carboxyvinyl)-alpha-D-glucosamine + phosphate. The protein operates within cell wall biogenesis; peptidoglycan biosynthesis. In terms of biological role, cell wall formation. Adds enolpyruvyl to UDP-N-acetylglucosamine. The polypeptide is UDP-N-acetylglucosamine 1-carboxyvinyltransferase (Cupriavidus taiwanensis (strain DSM 17343 / BCRC 17206 / CCUG 44338 / CIP 107171 / LMG 19424 / R1) (Ralstonia taiwanensis (strain LMG 19424))).